Here is a 203-residue protein sequence, read N- to C-terminus: Guanylate kinase (203 aa).

The region spanning 5–184 is the Guanylate kinase-like domain; that stretch reads GMLIVLSGPS…AVQRIEKIIE (180 aa). 12–19 serves as a coordination point for ATP; it reads GPSGVGKG.

Belongs to the guanylate kinase family.

The protein localises to the cytoplasm. It carries out the reaction GMP + ATP = GDP + ADP. Functionally, essential for recycling GMP and indirectly, cGMP. The chain is Guanylate kinase from Latilactobacillus sakei subsp. sakei (strain 23K) (Lactobacillus sakei subsp. sakei).